A 156-amino-acid polypeptide reads, in one-letter code: Calglandulin (156 aa).

EF-hand domains follow at residues 8–43 (EQITEYKGIFEMFDEEGNGLVKTDDLESLMSLVGIN), 44–79 (PTKRDLANMAKDVDKDKKGTFNCDGFLALMGIYHEK), 82–117 (NQDEELRAAFKVFDKEHKGYIEWDTLKYVLMNAGEP), and 118–153 (LNEQEAELMMKEADKDGDGTIDYEEFVAMMTGESFK). Residues Asp-131, Asp-133, Asp-135, Thr-137, and Glu-142 each contribute to the Ca(2+) site.

It belongs to the calmodulin family. Calglandulin subfamily. In terms of tissue distribution, expressed by the venom gland.

It localises to the cytoplasm. In terms of biological role, may be involved in the cellular control mechanism of the secretion of toxins from the gland into the venom. In Bothrops insularis (Golden lancehead), this protein is Calglandulin.